Here is a 243-residue protein sequence, read N- to C-terminus: Pyridoxine 5'-phosphate synthase (243 aa).

Asparagine 9 contacts 3-amino-2-oxopropyl phosphate. 11-12 is a binding site for 1-deoxy-D-xylulose 5-phosphate; the sequence is DH. Arginine 20 serves as a coordination point for 3-amino-2-oxopropyl phosphate. The active-site Proton acceptor is histidine 45. The 1-deoxy-D-xylulose 5-phosphate site is built by arginine 47 and histidine 52. The active-site Proton acceptor is the glutamate 72. Residue threonine 102 participates in 1-deoxy-D-xylulose 5-phosphate binding. The active-site Proton donor is the histidine 193. 3-amino-2-oxopropyl phosphate-binding positions include glycine 194 and 215-216; that span reads GH.

The protein belongs to the PNP synthase family. Homooctamer; tetramer of dimers.

The protein resides in the cytoplasm. The catalysed reaction is 3-amino-2-oxopropyl phosphate + 1-deoxy-D-xylulose 5-phosphate = pyridoxine 5'-phosphate + phosphate + 2 H2O + H(+). The protein operates within cofactor biosynthesis; pyridoxine 5'-phosphate biosynthesis; pyridoxine 5'-phosphate from D-erythrose 4-phosphate: step 5/5. In terms of biological role, catalyzes the complicated ring closure reaction between the two acyclic compounds 1-deoxy-D-xylulose-5-phosphate (DXP) and 3-amino-2-oxopropyl phosphate (1-amino-acetone-3-phosphate or AAP) to form pyridoxine 5'-phosphate (PNP) and inorganic phosphate. In Shigella sonnei (strain Ss046), this protein is Pyridoxine 5'-phosphate synthase.